The chain runs to 213 residues: Ribosomal RNA small subunit methyltransferase G (213 aa).

S-adenosyl-L-methionine is bound by residues Gly-72, Phe-77, 125–126, and Arg-141; that span reads IE.

Belongs to the methyltransferase superfamily. RNA methyltransferase RsmG family.

Its subcellular location is the cytoplasm. The catalysed reaction is guanosine(527) in 16S rRNA + S-adenosyl-L-methionine = N(7)-methylguanosine(527) in 16S rRNA + S-adenosyl-L-homocysteine. Functionally, specifically methylates the N7 position of guanine in position 527 of 16S rRNA. This is Ribosomal RNA small subunit methyltransferase G from Rhizobium meliloti (strain 1021) (Ensifer meliloti).